The following is a 392-amino-acid chain: Ribosomal RNA large subunit methyltransferase G (392 aa).

It belongs to the methyltransferase superfamily. RlmG family.

It is found in the cytoplasm. The enzyme catalyses guanosine(1835) in 23S rRNA + S-adenosyl-L-methionine = N(2)-methylguanosine(1835) in 23S rRNA + S-adenosyl-L-homocysteine + H(+). Functionally, specifically methylates the guanine in position 1835 (m2G1835) of 23S rRNA. This Colwellia psychrerythraea (strain 34H / ATCC BAA-681) (Vibrio psychroerythus) protein is Ribosomal RNA large subunit methyltransferase G.